Reading from the N-terminus, the 325-residue chain is Malate dehydrogenase (325 aa).

7 to 13 contacts NADP(+); the sequence is GSTGRVG. Substrate contacts are provided by Arg84 and Arg90. Residues Asn97 and 120 to 122 contribute to the NADP(+) site; that span reads VTN. Substrate-binding residues include Asn122 and Arg153. His177 serves as the catalytic Proton acceptor.

Belongs to the LDH/MDH superfamily.

It carries out the reaction (S)-malate + NADP(+) = oxaloacetate + NADPH + H(+). The enzyme catalyses (S)-malate + NAD(+) = oxaloacetate + NADH + H(+). Catalyzes the reversible oxidation of malate to oxaloacetate. Can use NAD(+) and NADP(+) with similar specific activity. The protein is Malate dehydrogenase of Methanothermobacter marburgensis (strain ATCC BAA-927 / DSM 2133 / JCM 14651 / NBRC 100331 / OCM 82 / Marburg) (Methanobacterium thermoautotrophicum).